Reading from the N-terminus, the 154-residue chain is Urease accessory protein UreE (154 aa).

It belongs to the UreE family.

The protein resides in the cytoplasm. In terms of biological role, involved in urease metallocenter assembly. Binds nickel. Probably functions as a nickel donor during metallocenter assembly. The sequence is that of Urease accessory protein UreE from Escherichia coli O157:H7.